The sequence spans 156 residues: Probable chemoreceptor glutamine deamidase CheD (156 aa).

Belongs to the CheD family.

The catalysed reaction is L-glutaminyl-[protein] + H2O = L-glutamyl-[protein] + NH4(+). In terms of biological role, probably deamidates glutamine residues to glutamate on methyl-accepting chemotaxis receptors (MCPs), playing an important role in chemotaxis. The chain is Probable chemoreceptor glutamine deamidase CheD from Sulfurimonas denitrificans (strain ATCC 33889 / DSM 1251) (Thiomicrospira denitrificans (strain ATCC 33889 / DSM 1251)).